We begin with the raw amino-acid sequence, 270 residues long: Gap junction beta-3 protein (270 aa).

At 1-20 (MDWKKLQDLLSGVNQYSTAF) the chain is on the cytoplasmic side. Residues 21-40 (GRIWLSVVFVFRVLVYVVAA) form a helical membrane-spanning segment. Topologically, residues 41-75 (ERVWGDEQKDFDCNTRQPGCTNVCYDNFFPISNIR) are extracellular. Residues 76-98 (LWALQLIFVTCPSMLVILHVAYR) traverse the membrane as a helical segment. Topologically, residues 99-126 (EERERKHRQKHGEHCAKLYSHPGKKHGG) are cytoplasmic. Residues 127–149 (LWWTYLFSLIFKLIIELVFLYVL) form a helical membrane-spanning segment. Topologically, residues 150–188 (HTLWHGFTMPRLVQCASVVPCPNTVDCYIARPTEKKVFT) are extracellular. The chain crosses the membrane as a helical span at residues 189 to 211 (YFMVGASAVCIILTICEICYLIF). The Cytoplasmic segment spans residues 212-270 (HRIMRGLSKDKSTKSISSPKSSSRASTCRCHHKLLESGDLEAVPADDKLQASAPSLTPI).

The protein belongs to the connexin family. Beta-type (group I) subfamily. As to quaternary structure, a connexon is composed of a hexamer of connexins. Interacts with CNST.

It localises to the cell membrane. The protein localises to the cell junction. The protein resides in the gap junction. Its function is as follows. One gap junction consists of a cluster of closely packed pairs of transmembrane channels, the connexons, through which materials of low MW diffuse from one cell to a neighboring cell. The protein is Gap junction beta-3 protein (Gjb3) of Rattus norvegicus (Rat).